The sequence spans 721 residues: Polyribonucleotide nucleotidyltransferase (721 aa).

Mg(2+)-binding residues include aspartate 495 and aspartate 501. The KH domain maps to proline 562–isoleucine 621. Residues glycine 631–arginine 699 enclose the S1 motif domain. The tract at residues glycine 700–asparagine 721 is disordered. The segment covering alanine 711–asparagine 721 has biased composition (pro residues).

The protein belongs to the polyribonucleotide nucleotidyltransferase family. It depends on Mg(2+) as a cofactor.

It is found in the cytoplasm. It carries out the reaction RNA(n+1) + phosphate = RNA(n) + a ribonucleoside 5'-diphosphate. Its function is as follows. Involved in mRNA degradation. Catalyzes the phosphorolysis of single-stranded polyribonucleotides processively in the 3'- to 5'-direction. The sequence is that of Polyribonucleotide nucleotidyltransferase from Synechococcus sp. (strain WH7803).